The sequence spans 132 residues: ATP synthase epsilon chain, chloroplastic (132 aa).

This sequence belongs to the ATPase epsilon chain family. As to quaternary structure, F-type ATPases have 2 components, CF(1) - the catalytic core - and CF(0) - the membrane proton channel. CF(1) has five subunits: alpha(3), beta(3), gamma(1), delta(1), epsilon(1). CF(0) has three main subunits: a, b and c.

The protein localises to the plastid. It is found in the chloroplast thylakoid membrane. Functionally, produces ATP from ADP in the presence of a proton gradient across the membrane. This chain is ATP synthase epsilon chain, chloroplastic, found in Pylaiella littoralis (Seaweed).